We begin with the raw amino-acid sequence, 109 residues long: UPF0060 membrane protein ABO_1373 (109 aa).

The next 4 membrane-spanning stretches (helical) occupy residues 1–21 (MLAL…IVGC), 33–53 (PGWV…LLSL), 63–83 (AAYG…VEGV), and 87–107 (PWDF…MFAP).

Belongs to the UPF0060 family.

It localises to the cell inner membrane. This is UPF0060 membrane protein ABO_1373 from Alcanivorax borkumensis (strain ATCC 700651 / DSM 11573 / NCIMB 13689 / SK2).